The primary structure comprises 544 residues: Chaperonin GroEL (544 aa).

ATP-binding positions include 30–33 (TLGP), Lys51, 87–91 (DGTTT), Gly415, and Asp496.

It belongs to the chaperonin (HSP60) family. In terms of assembly, forms a cylinder of 14 subunits composed of two heptameric rings stacked back-to-back. Interacts with the co-chaperonin GroES.

It localises to the cytoplasm. The catalysed reaction is ATP + H2O + a folded polypeptide = ADP + phosphate + an unfolded polypeptide.. In terms of biological role, together with its co-chaperonin GroES, plays an essential role in assisting protein folding. The GroEL-GroES system forms a nano-cage that allows encapsulation of the non-native substrate proteins and provides a physical environment optimized to promote and accelerate protein folding. This is Chaperonin GroEL from Granulibacter bethesdensis (strain ATCC BAA-1260 / CGDNIH1).